The following is a 152-amino-acid chain: UPF0178 protein CKL_3490 (152 aa).

The protein belongs to the UPF0178 family.

The protein is UPF0178 protein CKL_3490 of Clostridium kluyveri (strain ATCC 8527 / DSM 555 / NBRC 12016 / NCIMB 10680 / K1).